The primary structure comprises 546 residues: Medium-chain-fatty-acid--CoA ligase (546 aa).

A Mg(2+)-binding site is contributed by T185. Residues W235 and T329 each coordinate ATP. Mg(2+) is bound at residue E330. 4 residues coordinate ATP: D417, K434, K438, and W443.

It belongs to the ATP-dependent AMP-binding enzyme family.

Its subcellular location is the cytoplasm. It catalyses the reaction a medium-chain fatty acid + ATP + CoA = a medium-chain fatty acyl-CoA + AMP + diphosphate. Its pathway is lipid metabolism; fatty acid metabolism. This chain is Medium-chain-fatty-acid--CoA ligase, found in Ectopseudomonas oleovorans (Pseudomonas oleovorans).